We begin with the raw amino-acid sequence, 431 residues long: D-inositol 3-phosphate glycosyltransferase (431 aa).

Residue histidine 14 participates in 1D-myo-inositol 3-phosphate binding. UDP-N-acetyl-alpha-D-glucosamine is bound by residues 20–21 and glycine 28; that span reads QP. 1D-myo-inositol 3-phosphate contacts are provided by residues 25–30, lysine 83, tyrosine 116, threonine 140, and arginine 160; that span reads DAGGMN. UDP-N-acetyl-alpha-D-glucosamine-binding residues include arginine 240 and lysine 245. Mg(2+) is bound by residues tyrosine 315, arginine 316, and alanine 318. The UDP-N-acetyl-alpha-D-glucosamine site is built by glutamate 328 and glutamate 336. Threonine 342 lines the Mg(2+) pocket.

The protein belongs to the glycosyltransferase group 1 family. MshA subfamily. As to quaternary structure, homodimer.

The enzyme catalyses 1D-myo-inositol 3-phosphate + UDP-N-acetyl-alpha-D-glucosamine = 1D-myo-inositol 2-acetamido-2-deoxy-alpha-D-glucopyranoside 3-phosphate + UDP + H(+). Catalyzes the transfer of a N-acetyl-glucosamine moiety to 1D-myo-inositol 3-phosphate to produce 1D-myo-inositol 2-acetamido-2-deoxy-glucopyranoside 3-phosphate in the mycothiol biosynthesis pathway. The chain is D-inositol 3-phosphate glycosyltransferase from Thermomonospora curvata (strain ATCC 19995 / DSM 43183 / JCM 3096 / KCTC 9072 / NBRC 15933 / NCIMB 10081 / Henssen B9).